Reading from the N-terminus, the 182-residue chain is Peptidyl-tRNA hydrolase (182 aa).

Y14 is a binding site for tRNA. H19 acts as the Proton acceptor in catalysis. Residues Y65, N67, and N113 each contribute to the tRNA site.

The protein belongs to the PTH family. Monomer.

The protein localises to the cytoplasm. The catalysed reaction is an N-acyl-L-alpha-aminoacyl-tRNA + H2O = an N-acyl-L-amino acid + a tRNA + H(+). In terms of biological role, hydrolyzes ribosome-free peptidyl-tRNAs (with 1 or more amino acids incorporated), which drop off the ribosome during protein synthesis, or as a result of ribosome stalling. Catalyzes the release of premature peptidyl moieties from peptidyl-tRNA molecules trapped in stalled 50S ribosomal subunits, and thus maintains levels of free tRNAs and 50S ribosomes. This Rickettsia peacockii (strain Rustic) protein is Peptidyl-tRNA hydrolase.